A 193-amino-acid chain; its full sequence is Interferon lambda-3 (193 aa).

The signal sequence occupies residues 1–19 (MLLLLLPLLLAAVLTRTQA). 3 disulfide bridges follow: C35-C132, C69-C166, and C185-C192.

Belongs to the lambda interferon family.

Its subcellular location is the secreted. Functionally, cytokine with antiviral, antitumour and immunomodulatory activities. Plays a critical role in the antiviral host defense, predominantly in the epithelial tissues. Acts as a ligand for the heterodimeric class II cytokine receptor composed of IL10RB and IFNLR1, and receptor engagement leads to the activation of the JAK/STAT signaling pathway resulting in the expression of IFN-stimulated genes (ISG), which mediate the antiviral state. Has a restricted receptor distribution and therefore restricted targets: is primarily active in epithelial cells and this cell type-selective action is because of the epithelial cell-specific expression of its receptor IFNLR1. Seems not to be essential for early virus-activated host defense in vaginal infection, but plays an important role in Toll-like receptor (TLR)-induced antiviral defense. Plays a significant role in the antiviral immune defense in the intestinal epithelium. Exerts an immunomodulatory effect by up-regulating MHC class I antigen expression. This is Interferon lambda-3 (Ifnl3) from Mus musculus (Mouse).